Here is a 317-residue protein sequence, read N- to C-terminus: Curved DNA-binding protein (317 aa).

The region spanning 5 to 69 is the J domain; the sequence is DYYKILGVEP…QKRAEFDEIR (65 aa).

It localises to the cytoplasm. The protein localises to the nucleoid. DNA-binding protein that preferentially recognizes a curved DNA sequence. It is probably a functional analog of DnaJ; displays overlapping activities with DnaJ, but functions under different conditions, probably acting as a molecular chaperone in an adaptive response to environmental stresses other than heat shock. Lacks autonomous chaperone activity; binds native substrates and targets them for recognition by DnaK. Its activity is inhibited by the binding of CbpM. The polypeptide is Curved DNA-binding protein (Pseudomonas putida (strain W619)).